Here is a 352-residue protein sequence, read N- to C-terminus: Beta-methylmalyl-CoA dehydratase (352 aa).

One can recognise a MaoC-like domain in the interval 16–129 (LGQTIVHATP…GKTGVVYVHS (114 aa)). Substrate contacts are provided by residues 62–65 (PIDS), 85–88 (IANL), and 96–98 (GAV).

As to quaternary structure, homodimer.

The catalysed reaction is (2R,3S)-beta-methylmalyl-CoA = 2-methylfumaryl-CoA + H2O. Functionally, involved in the glyoxylate assimilation cycle used to regenerate acetyl-CoA and produce pyruvate as universal precursor for biosynthesis. Catalyzes the reversible dehydration of beta-methylmalyl-CoA ((2R,3S)-beta-methylmalyl-CoA) to yield mesaconyl-CoA (2-methylfumaryl-CoA). The sequence is that of Beta-methylmalyl-CoA dehydratase (mch) from Chloroflexus aurantiacus (strain ATCC 29366 / DSM 635 / J-10-fl).